The sequence spans 164 residues: 6,7-dimethyl-8-ribityllumazine synthase (164 aa).

5-amino-6-(D-ribitylamino)uracil-binding positions include Y30, 61-63, and 85-87; these read ALE and CVI. (2S)-2-hydroxy-3-oxobutyl phosphate is bound at residue 90–91; it reads ET. H93 (proton donor) is an active-site residue. Position 118 (N118) interacts with 5-amino-6-(D-ribitylamino)uracil. R132 contributes to the (2S)-2-hydroxy-3-oxobutyl phosphate binding site.

The protein belongs to the DMRL synthase family.

The enzyme catalyses (2S)-2-hydroxy-3-oxobutyl phosphate + 5-amino-6-(D-ribitylamino)uracil = 6,7-dimethyl-8-(1-D-ribityl)lumazine + phosphate + 2 H2O + H(+). It functions in the pathway cofactor biosynthesis; riboflavin biosynthesis; riboflavin from 2-hydroxy-3-oxobutyl phosphate and 5-amino-6-(D-ribitylamino)uracil: step 1/2. Catalyzes the formation of 6,7-dimethyl-8-ribityllumazine by condensation of 5-amino-6-(D-ribitylamino)uracil with 3,4-dihydroxy-2-butanone 4-phosphate. This is the penultimate step in the biosynthesis of riboflavin. In Methylobacterium radiotolerans (strain ATCC 27329 / DSM 1819 / JCM 2831 / NBRC 15690 / NCIMB 10815 / 0-1), this protein is 6,7-dimethyl-8-ribityllumazine synthase.